A 219-amino-acid chain; its full sequence is MTEKMTRMTQFVKEEIANAITHGIGAILSIPALIILIIHASKHGTASAVVAFTVYGVSMFLLYLFSTLLHSIHHPKVEKLFTILDHSAIYLLIAGTYTPFLLITLRGPLGWTLLAIIWTLAIGGIIFKIFFVRRFIKASTLCYIIMGWLIIVAIKPLYENLTGHGFSLLLAGGILYSVGAIFFLWEKLPFNHAIWHLFVLGGSAMMFFCVLFYVLPTAS.

Transmembrane regions (helical) follow at residues 19 to 39 (AITHGIGAILSIPALIILIIH), 49 to 69 (VVAFTVYGVSMFLLYLFSTLL), 83 to 103 (ILDHSAIYLLIAGTYTPFLLI), 112 to 132 (TLLAIIWTLAIGGIIFKIFFV), 138 to 158 (ASTLCYIIMGWLIIVAIKPLY), 165 to 185 (GFSLLLAGGILYSVGAIFFLW), and 194 to 214 (IWHLFVLGGSAMMFFCVLFYV).

This sequence belongs to the UPF0073 (Hly-III) family.

The protein localises to the cell membrane. In terms of biological role, might be virulent against a mammalian host; when expressed in E.coli, the soluble extract has hemolytic activity on human erythrocytes. The activity is not inhibited by cholesterol or activated by 2-mercaptoethanol. Might be pore-forming protein. Its in vivo role in virulence is untested, nor has it been shown to be secreted by B.cereus. The protein is Hemolysin-3 of Bacillus cereus.